The following is a 320-amino-acid chain: Aspartate carbamoyltransferase catalytic subunit (320 aa).

Residues R68 and T69 each contribute to the carbamoyl phosphate site. K96 is a binding site for L-aspartate. Residues R118, H148, and Q151 each contribute to the carbamoyl phosphate site. Residues R181 and R236 each contribute to the L-aspartate site. Carbamoyl phosphate-binding residues include G277 and P278.

The protein belongs to the aspartate/ornithine carbamoyltransferase superfamily. ATCase family. In terms of assembly, heterododecamer (2C3:3R2) of six catalytic PyrB chains organized as two trimers (C3), and six regulatory PyrI chains organized as three dimers (R2).

The enzyme catalyses carbamoyl phosphate + L-aspartate = N-carbamoyl-L-aspartate + phosphate + H(+). It functions in the pathway pyrimidine metabolism; UMP biosynthesis via de novo pathway; (S)-dihydroorotate from bicarbonate: step 2/3. In terms of biological role, catalyzes the condensation of carbamoyl phosphate and aspartate to form carbamoyl aspartate and inorganic phosphate, the committed step in the de novo pyrimidine nucleotide biosynthesis pathway. This is Aspartate carbamoyltransferase catalytic subunit from Polaromonas sp. (strain JS666 / ATCC BAA-500).